We begin with the raw amino-acid sequence, 34 residues long: Potassium channel toxin (34 aa).

Cystine bridges form between Cys6–Cys25, Cys11–Cys29, and Cys15–Cys31.

Belongs to the short scorpion toxin superfamily. Potassium channel inhibitor family. Alpha-KTx 21 subfamily. In terms of tissue distribution, expressed by the venom gland.

The protein localises to the secreted. Functionally, toxin that blocks voltage-gated potassium channels (Kv). The polypeptide is Potassium channel toxin (Tityus metuendus (Scorpion)).